The chain runs to 149 residues: Nucleoside diphosphate kinase 1 (149 aa).

ATP contacts are provided by Lys9, Phe57, Arg85, Thr91, Arg102, and Asn112. The active-site Pros-phosphohistidine intermediate is the His115.

Belongs to the NDK family. Requires Mg(2+) as cofactor. Autophosphorylated.

The catalysed reaction is a 2'-deoxyribonucleoside 5'-diphosphate + ATP = a 2'-deoxyribonucleoside 5'-triphosphate + ADP. The enzyme catalyses a ribonucleoside 5'-diphosphate + ATP = a ribonucleoside 5'-triphosphate + ADP. Its function is as follows. Major role in the synthesis of nucleoside triphosphates other than ATP. The ATP gamma phosphate is transferred to the NDP beta phosphate via a ping-pong mechanism, using a phosphorylated active-site intermediate. Also exhibits a kinase-like activity towards histone H1. This Saccharum officinarum (Sugarcane) protein is Nucleoside diphosphate kinase 1 (NDPK1).